We begin with the raw amino-acid sequence, 527 residues long: V(D)J recombination-activating protein 2 (527 aa).

The tract at residues Glu-357–Asp-380 is disordered. The span at Glu-358–Glu-370 shows a compositional bias: polar residues. Residues Asp-371–Asp-380 are compositionally biased toward acidic residues. The PHD-type; atypical zinc finger occupies Trp-416–Ile-484. Residues Cys-419, Cys-423, Cys-446, His-452, His-455, Cys-458, Cys-478, and His-481 each contribute to the Zn(2+) site.

The protein belongs to the RAG2 family. As to quaternary structure, component of the RAG complex composed of core components RAG1 and RAG2, and associated component HMGB1 or HMGB2. In terms of tissue distribution, cells of the B- and T-lymphocyte lineages.

The protein localises to the nucleus. Its function is as follows. Core component of the RAG complex, a multiprotein complex that mediates the DNA cleavage phase during V(D)J recombination. V(D)J recombination assembles a diverse repertoire of immunoglobulin and T-cell receptor genes in developing B and T-lymphocytes through rearrangement of different V (variable), in some cases D (diversity), and J (joining) gene segments. DNA cleavage by the RAG complex occurs in 2 steps: a first nick is introduced in the top strand immediately upstream of the heptamer, generating a 3'-hydroxyl group that can attack the phosphodiester bond on the opposite strand in a direct transesterification reaction, thereby creating 4 DNA ends: 2 hairpin coding ends and 2 blunt, 5'-phosphorylated ends. The chromatin structure plays an essential role in the V(D)J recombination reactions and the presence of histone H3 trimethylated at 'Lys-4' (H3K4me3) stimulates both the nicking and haipinning steps. The RAG complex also plays a role in pre-B cell allelic exclusion, a process leading to expression of a single immunoglobulin heavy chain allele to enforce clonality and monospecific recognition by the B-cell antigen receptor (BCR) expressed on individual B-lymphocytes. The introduction of DNA breaks by the RAG complex on one immunoglobulin allele induces ATM-dependent repositioning of the other allele to pericentromeric heterochromatin, preventing accessibility to the RAG complex and recombination of the second allele. In the RAG complex, RAG2 is not the catalytic component but is required for all known catalytic activities mediated by RAG1. It probably acts as a sensor of chromatin state that recruits the RAG complex to H3K4me3. The chain is V(D)J recombination-activating protein 2 (RAG2) from Homo sapiens (Human).